The following is a 476-amino-acid chain: Ribulose bisphosphate carboxylase large chain (476 aa).

A propeptide spanning residues 1-2 (MS) is cleaved from the precursor. Proline 3 bears the N-acetylproline mark. An N6,N6,N6-trimethyllysine modification is found at lysine 14. Substrate is bound by residues asparagine 123 and threonine 173. Residue lysine 175 is the Proton acceptor of the active site. Lysine 177 provides a ligand contact to substrate. 3 residues coordinate Mg(2+): lysine 201, aspartate 203, and glutamate 204. Residue lysine 201 is modified to N6-carboxylysine. Histidine 294 (proton acceptor) is an active-site residue. Substrate contacts are provided by arginine 295, histidine 327, and serine 379.

Belongs to the RuBisCO large chain family. Type I subfamily. In terms of assembly, heterohexadecamer of 8 large chains and 8 small chains; disulfide-linked. The disulfide link is formed within the large subunit homodimers. Mg(2+) is required as a cofactor. Post-translationally, the disulfide bond which can form in the large chain dimeric partners within the hexadecamer appears to be associated with oxidative stress and protein turnover.

Its subcellular location is the plastid. The protein resides in the chloroplast. The enzyme catalyses 2 (2R)-3-phosphoglycerate + 2 H(+) = D-ribulose 1,5-bisphosphate + CO2 + H2O. The catalysed reaction is D-ribulose 1,5-bisphosphate + O2 = 2-phosphoglycolate + (2R)-3-phosphoglycerate + 2 H(+). Its function is as follows. RuBisCO catalyzes two reactions: the carboxylation of D-ribulose 1,5-bisphosphate, the primary event in carbon dioxide fixation, as well as the oxidative fragmentation of the pentose substrate in the photorespiration process. Both reactions occur simultaneously and in competition at the same active site. The polypeptide is Ribulose bisphosphate carboxylase large chain (Brachypodium distachyon (Purple false brome)).